The sequence spans 249 residues: Pleckstrin homology domain-containing family F member 2 (249 aa).

The region spanning 35–131 (VLIGEGVLTK…WMNHINKCVS (97 aa)) is the PH domain. Residues 152–212 (DSEATVCMRC…ICDSCYDLLS (61 aa)) form an FYVE-type zinc finger. The Zn(2+) site is built by C158, C161, C175, C178, C183, C186, C204, and C207. The segment covering 219 to 232 (CQSTRSDSYSQSPK) has biased composition (polar residues). The disordered stretch occupies residues 219 to 249 (CQSTRSDSYSQSPKSSLNDASDDDDDEDSSD). Positions 238-249 (ASDDDDDEDSSD) are enriched in acidic residues.

The protein resides in the early endosome membrane. Its subcellular location is the endoplasmic reticulum. Its function is as follows. May play a role in early endosome fusion upstream of RAB5, hence regulating receptor trafficking and fluid-phase transport. Enhances cellular sensitivity to TNF-induced apoptosis. This chain is Pleckstrin homology domain-containing family F member 2 (PLEKHF2), found in Gallus gallus (Chicken).